The sequence spans 297 residues: Quinate/shikimate dehydrogenase (297 aa).

Substrate is bound by residues Lys-80 and Asp-116. NAD(+)-binding positions include Ala-141–Ala-144, Asn-164–Asp-167, Lys-214, Cys-241–Asn-244, and Gly-264.

Belongs to the shikimate dehydrogenase family. As to quaternary structure, homodimer.

It catalyses the reaction L-quinate + NAD(+) = 3-dehydroquinate + NADH + H(+). The enzyme catalyses L-quinate + NADP(+) = 3-dehydroquinate + NADPH + H(+). It carries out the reaction shikimate + NADP(+) = 3-dehydroshikimate + NADPH + H(+). The catalysed reaction is shikimate + NAD(+) = 3-dehydroshikimate + NADH + H(+). It functions in the pathway metabolic intermediate biosynthesis; chorismate biosynthesis; chorismate from D-erythrose 4-phosphate and phosphoenolpyruvate: step 4/7. Functionally, the actual biological function of YdiB remains unclear, nor is it known whether 3-dehydroshikimate or quinate represents the natural substrate. Catalyzes the reversible NAD-dependent reduction of both 3-dehydroshikimate (DHSA) and 3-dehydroquinate to yield shikimate (SA) and quinate, respectively. It can use both NAD or NADP for catalysis, however it has higher catalytic efficiency with NAD. This chain is Quinate/shikimate dehydrogenase, found in Shigella dysenteriae serotype 1 (strain Sd197).